A 257-amino-acid polypeptide reads, in one-letter code: Pyrroline-5-carboxylate reductase (257 aa).

The protein belongs to the pyrroline-5-carboxylate reductase family.

The protein resides in the cytoplasm. It carries out the reaction L-proline + NADP(+) = (S)-1-pyrroline-5-carboxylate + NADPH + 2 H(+). The catalysed reaction is L-proline + NAD(+) = (S)-1-pyrroline-5-carboxylate + NADH + 2 H(+). It functions in the pathway amino-acid biosynthesis; L-proline biosynthesis; L-proline from L-glutamate 5-semialdehyde: step 1/1. Functionally, catalyzes the reduction of 1-pyrroline-5-carboxylate (PCA) to L-proline. This chain is Pyrroline-5-carboxylate reductase, found in Helicobacter pylori (strain J99 / ATCC 700824) (Campylobacter pylori J99).